Reading from the N-terminus, the 949-residue chain is L-fucokinase/L-fucose-1-P guanylyltransferase (949 aa).

The fucose-1-phosphate guanylyltransferase stretch occupies residues 25–191 (DWFCTSDPVG…DFMLQKPSLA (167 aa)). An L-fucokinase region spans residues 559–949 (LLRDGLLDGI…SDKGFQVSRS (391 aa)).

This sequence belongs to the GHMP kinase family. As to quaternary structure, homotetramer. Mn(2+) serves as cofactor. It depends on Mg(2+) as a cofactor.

It carries out the reaction L-fucose + ATP = beta-L-fucose 1-phosphate + ADP + H(+). The enzyme catalyses beta-L-fucose 1-phosphate + GTP + H(+) = GDP-beta-L-fucose + diphosphate. In terms of biological role, bifunctional enzyme involved in the salvage pathway of GDP-fucose synthesis. Catalyzes two successive reactions, the ATP-dependent phosphorylation of L-fucose to L-fucose 1-phosphate, and its guanylylation to GDP-L-fucose. GDP-fucose is an important fucose donor in the process of fucosylated oligosaccharides formation. This chain is L-fucokinase/L-fucose-1-P guanylyltransferase, found in Bacteroides fragilis.